The following is a 232-amino-acid chain: ATP synthase subunit a (232 aa).

6 consecutive transmembrane segments (helical) span residues 18–38 (LLFI…IAFI), 74–94 (WAGL…LGLF), 107–127 (TYSL…YLAF), 142–162 (ALIP…PIAL), 173–193 (GHLL…SLMV), and 195–215 (SIPI…VACI).

The protein belongs to the ATPase A chain family. In terms of assembly, F-type ATPases have 2 components, CF(1) - the catalytic core - and CF(0) - the membrane proton channel. CF(1) has five subunits: alpha(3), beta(3), gamma(1), delta(1), epsilon(1). CF(0) has three main subunits: a, b and c.

It localises to the mitochondrion inner membrane. Functionally, mitochondrial membrane ATP synthase (F(1)F(0) ATP synthase or Complex V) produces ATP from ADP in the presence of a proton gradient across the membrane which is generated by electron transport complexes of the respiratory chain. F-type ATPases consist of two structural domains, F(1) - containing the extramembraneous catalytic core and F(0) - containing the membrane proton channel, linked together by a central stalk and a peripheral stalk. During catalysis, ATP synthesis in the catalytic domain of F(1) is coupled via a rotary mechanism of the central stalk subunits to proton translocation. Key component of the proton channel; it may play a direct role in the translocation of protons across the membrane. This Paracentrotus lividus (Common sea urchin) protein is ATP synthase subunit a (ATP6).